Consider the following 270-residue polypeptide: Formamidopyrimidine-DNA glycosylase (270 aa).

P2 acts as the Schiff-base intermediate with DNA in catalysis. E3 acts as the Proton donor in catalysis. The Proton donor; for beta-elimination activity role is filled by K58. Positions 91, 110, and 151 each coordinate DNA. The FPG-type zinc-finger motif lies at 236–270 (FAYGRGGQPCKVCGTTLREIKLGQRASVYCPKCQR). R260 (proton donor; for delta-elimination activity) is an active-site residue.

It belongs to the FPG family. In terms of assembly, monomer. Zn(2+) is required as a cofactor.

The catalysed reaction is Hydrolysis of DNA containing ring-opened 7-methylguanine residues, releasing 2,6-diamino-4-hydroxy-5-(N-methyl)formamidopyrimidine.. It carries out the reaction 2'-deoxyribonucleotide-(2'-deoxyribose 5'-phosphate)-2'-deoxyribonucleotide-DNA = a 3'-end 2'-deoxyribonucleotide-(2,3-dehydro-2,3-deoxyribose 5'-phosphate)-DNA + a 5'-end 5'-phospho-2'-deoxyribonucleoside-DNA + H(+). Functionally, involved in base excision repair of DNA damaged by oxidation or by mutagenic agents. Acts as a DNA glycosylase that recognizes and removes damaged bases. Has a preference for oxidized purines, such as 7,8-dihydro-8-oxoguanine (8-oxoG). Has AP (apurinic/apyrimidinic) lyase activity and introduces nicks in the DNA strand. Cleaves the DNA backbone by beta-delta elimination to generate a single-strand break at the site of the removed base with both 3'- and 5'-phosphates. This is Formamidopyrimidine-DNA glycosylase from Pseudomonas syringae pv. tomato (strain ATCC BAA-871 / DC3000).